A 164-amino-acid chain; its full sequence is UPF0304 protein CKO_00501 (164 aa).

The protein belongs to the UPF0304 family.

This chain is UPF0304 protein CKO_00501, found in Citrobacter koseri (strain ATCC BAA-895 / CDC 4225-83 / SGSC4696).